The primary structure comprises 480 residues: Probable pectin lyase F-2 (480 aa).

The N-terminal stretch at 1–25 (MTLIRTVLMAAALLGASAHAQGVVG) is a signal peptide. Cysteine 83 and cysteine 106 are oxidised to a cystine. The N-linked (GlcNAc...) asparagine glycan is linked to asparagine 111. Arginine 256 is a catalytic residue. An intrachain disulfide couples cysteine 322 to cysteine 330. The segment covering 386 to 401 (SSSAIPSSTPAPSSSA) has biased composition (low complexity). A disordered region spans residues 386-436 (SSSAIPSSTPAPSSSALAKRHGGHDRHGLGHIPHLTEGGPGAWHTPGPAPS).

It belongs to the polysaccharide lyase 1 family.

It localises to the secreted. It carries out the reaction Eliminative cleavage of (1-&gt;4)-alpha-D-galacturonan methyl ester to give oligosaccharides with 4-deoxy-6-O-methyl-alpha-D-galact-4-enuronosyl groups at their non-reducing ends.. Its function is as follows. Pectinolytic enzymes consist of four classes of enzymes: pectin lyase, polygalacturonase, pectin methylesterase and rhamnogalacturonase. Among pectinolytic enzymes, pectin lyase is the most important in depolymerization of pectin, since it cleaves internal glycosidic bonds of highly methylated pectins. The chain is Probable pectin lyase F-2 (pelF-2) from Aspergillus terreus (strain NIH 2624 / FGSC A1156).